The following is a 154-amino-acid chain: 6,7-dimethyl-8-ribityllumazine synthase (154 aa).

5-amino-6-(D-ribitylamino)uracil is bound by residues Phe-22, 56 to 58 (AFE), and 81 to 83 (VLI). 86 to 87 (ET) provides a ligand contact to (2S)-2-hydroxy-3-oxobutyl phosphate. The Proton donor role is filled by His-89. Phe-114 contacts 5-amino-6-(D-ribitylamino)uracil. A (2S)-2-hydroxy-3-oxobutyl phosphate-binding site is contributed by Arg-128.

It belongs to the DMRL synthase family.

It catalyses the reaction (2S)-2-hydroxy-3-oxobutyl phosphate + 5-amino-6-(D-ribitylamino)uracil = 6,7-dimethyl-8-(1-D-ribityl)lumazine + phosphate + 2 H2O + H(+). It participates in cofactor biosynthesis; riboflavin biosynthesis; riboflavin from 2-hydroxy-3-oxobutyl phosphate and 5-amino-6-(D-ribitylamino)uracil: step 1/2. Functionally, catalyzes the formation of 6,7-dimethyl-8-ribityllumazine by condensation of 5-amino-6-(D-ribitylamino)uracil with 3,4-dihydroxy-2-butanone 4-phosphate. This is the penultimate step in the biosynthesis of riboflavin. The chain is 6,7-dimethyl-8-ribityllumazine synthase from Chlamydia abortus (strain DSM 27085 / S26/3) (Chlamydophila abortus).